We begin with the raw amino-acid sequence, 810 residues long: Phospholipase D alpha 2 (810 aa).

A C2 domain is found at 1-126 (MEECLLHGRL…LHGEEVDRWV (126 aa)). A Ca(2+)-binding site is contributed by aspartate 187. Residues 327-365 (TMFTHHQKIVVVDSEMPSGGSRSRRIVSFVGGLDLCDGR) form the PLD phosphodiesterase 1 domain. Active-site residues include histidine 332, lysine 334, and aspartate 339. Histidine 332 serves as a coordination point for a 1,2-diacyl-sn-glycero-3-phosphate. Residues histidine 371 and histidine 405 each contribute to the Ca(2+) site. The a 1,2-diacyl-sn-glycero-3-phosphate site is built by glutamine 521 and histidine 661. The 28-residue stretch at 656 to 683 (FMIYVHTKMMIVDDEYIIIGSANINQRS) folds into the PLD phosphodiesterase 2 domain. Residues histidine 661, lysine 663, and aspartate 668 contribute to the active site. Glutamate 722 is a Ca(2+) binding site.

The protein belongs to the phospholipase D family. C2-PLD subfamily. Ca(2+) serves as cofactor. As to expression, highly expressed in roots, stems and flowers, moderately in leaves, seedlings and siliques. Not detected in dry seeds.

The protein resides in the cytoplasm. It is found in the membrane. The protein localises to the vacuole. Its subcellular location is the cytoplasmic vesicle. It localises to the clathrin-coated vesicle. It catalyses the reaction a 1,2-diacyl-sn-glycero-3-phosphocholine + H2O = a 1,2-diacyl-sn-glycero-3-phosphate + choline + H(+). Hydrolyzes glycerol-phospholipids at the terminal phosphodiesteric bond to generate phosphatidic acids (PA). Plays an important role in various cellular processes, including phytohormone action and response to stress, characterized by acidification of the cell. This chain is Phospholipase D alpha 2, found in Arabidopsis thaliana (Mouse-ear cress).